A 298-amino-acid polypeptide reads, in one-letter code: Tyrosine recombinase XerC (298 aa).

The 87-residue stretch at 2–88 (TDLHTDVERY…ALRSFFDWLV (87 aa)) folds into the Core-binding (CB) domain. Positions 109 to 288 (HLPKNIDVDD…DFQHLASVYD (180 aa)) constitute a Tyr recombinase domain. Residues R148, K172, H240, R243, and H266 contribute to the active site. Residue Y275 is the O-(3'-phospho-DNA)-tyrosine intermediate of the active site.

The protein belongs to the 'phage' integrase family. XerC subfamily. Forms a cyclic heterotetrameric complex composed of two molecules of XerC and two molecules of XerD, in which XerC interacts with XerD via its C-terminal region, XerD interacts with XerC via its C-terminal region and so on.

The protein resides in the cytoplasm. FtsK may regulate the catalytic switch between XerC and XerD in the heterotetrameric complex during the two steps of the recombination process. In terms of biological role, site-specific tyrosine recombinase, which acts by catalyzing the cutting and rejoining of the recombining DNA molecules. Binds cooperatively to specific DNA consensus sequences that are separated from XerD binding sites by a short central region, forming the heterotetrameric XerC-XerD complex that recombines DNA substrates. The complex is essential to convert dimers of the bacterial chromosome into monomers to permit their segregation at cell division. It also contributes to the segregational stability of plasmids. In the complex XerC specifically exchanges the top DNA strands. The protein is Tyrosine recombinase XerC of Shigella flexneri serotype 5b (strain 8401).